A 118-amino-acid chain; its full sequence is Cytochrome b-c1 complex subunit 7 (118 aa).

The interval 1 to 32 is igE-binding. Immunodominant epitope; induces specific IgE antibody production in mice. Causes degranulation of rat basophilic leukemia (RBL) cells and the release of beta-hexosaminidase from them; the sequence is MVHLTKTLRFINNPGFRKFYYGLQGYNKYGLY.

Belongs to the UQCRB/QCR7 family. Component of the ubiquinol-cytochrome c oxidoreductase (cytochrome b-c1 complex, complex III, CIII), a multisubunit enzyme composed of 3 respiratory subunits cytochrome b, cytochrome c1 and Rieske protein, 2 core protein subunits, and additional low-molecular weight protein subunits. The complex exists as an obligatory dimer and forms supercomplexes (SCs) in the inner mitochondrial membrane with cytochrome c oxidase (complex IV, CIV).

It is found in the mitochondrion inner membrane. Component of the ubiquinol-cytochrome c oxidoreductase, a multisubunit transmembrane complex that is part of the mitochondrial electron transport chain which drives oxidative phosphorylation. The respiratory chain contains 3 multisubunit complexes succinate dehydrogenase (complex II, CII), ubiquinol-cytochrome c oxidoreductase (cytochrome b-c1 complex, complex III, CIII) and cytochrome c oxidase (complex IV, CIV), that cooperate to transfer electrons derived from NADH and succinate to molecular oxygen, creating an electrochemical gradient over the inner membrane that drives transmembrane transport and the ATP synthase. The cytochrome b-c1 complex catalyzes electron transfer from ubiquinol to cytochrome c, linking this redox reaction to translocation of protons across the mitochondrial inner membrane, with protons being carried across the membrane as hydrogens on the quinol. In the process called Q cycle, 2 protons are consumed from the matrix, 4 protons are released into the intermembrane space and 2 electrons are passed to cytochrome c. The chain is Cytochrome b-c1 complex subunit 7 from Dermatophagoides farinae (American house dust mite).